The primary structure comprises 1093 residues: Phosphorylase b kinase regulatory subunit beta (1093 aa).

Ala2 carries the post-translational modification N-acetylalanine. The residue at position 4 (Ala4) is a Phosphoserine. Residues 7-29 form a calmodulin-binding region; the sequence is LTAEVSWKVLERRARTKRSGSVY. Ser12 bears the Phosphoserine; by autocatalysis mark. Residues Ser27 and Ser701 each carry the phosphoserine modification. The interval 689-716 is disordered; it reads EPPKHSKVKRQSSTPSAPELGQQPDVNI. Calmodulin-binding stretches follow at residues 768 to 795 and 920 to 951; these read RVYRRAGSQKLWLAVRYGAAFTQKFSSS and NGRCWLNRRQIDGSLNRTPTGFYDRVWQILER. Cys1090 carries S-farnesyl cysteine lipidation.

This sequence belongs to the phosphorylase b kinase regulatory chain family. In terms of assembly, hexadecamer of 4 heterotetramers, each composed of alpha, beta, gamma, and delta subunits. Alpha (PHKA1 or PHKA2) and beta (PHKB) are regulatory subunits, gamma (PHKG1 or PHKG2) is the catalytic subunit, and delta is calmodulin. In terms of processing, ser-701 is probably phosphorylated by PKA. Although the final Cys may be farnesylated, the terminal tripeptide is probably not removed, and the C-terminus is not methylated.

It localises to the cell membrane. It functions in the pathway glycan biosynthesis; glycogen metabolism. Its activity is regulated as follows. By phosphorylation of various serine residues. In terms of biological role, phosphorylase b kinase catalyzes the phosphorylation of serine in certain substrates, including troponin I. The beta chain acts as a regulatory unit and modulates the activity of the holoenzyme in response to phosphorylation. The protein is Phosphorylase b kinase regulatory subunit beta (PHKB) of Homo sapiens (Human).